Consider the following 242-residue polypeptide: Histone-lysine N-methyltransferase set-1 (242 aa).

Residues 1-61 are disordered; that stretch reads MKVAAKKLAT…TRSRKGVSVK (61 aa). The span at 30 to 43 shows a compositional bias: low complexity; sequence SENPSSLASHSSSS. The 123-residue stretch at 104–226 folds into the SET domain; sequence RLLEVYKDVV…QGEELLYDYG (123 aa). Residues 114–116, Y159, and 186–187 contribute to the S-adenosyl-L-methionine site; these read KGR and NH.

This sequence belongs to the class V-like SAM-binding methyltransferase superfamily. Histone-lysine methyltransferase family. PR/SET subfamily. In embryos, it is expressed ubiquitously. In late embryos, it is expressed in hypodermal seam cells. In L3 and L4 larvae and thereafter, it is expressed in vulval precursor cells. In adult males, it is also expressed in 6 unidentified posterior cells.

The protein localises to the nucleus. Its subcellular location is the chromosome. It catalyses the reaction L-lysyl(20)-[histone H4] + S-adenosyl-L-methionine = N(6)-methyl-L-lysyl(20)-[histone H4] + S-adenosyl-L-homocysteine + H(+). Functionally, histone methyltransferase that specifically monomethylates 'Lys-20' of histone H4 (H4K20me1). H4K20me1 is enriched on hermaphrodite X chromosomes and during mitosis. Involved in dosage compensation by repression of X-linked gene expression in hermaphrodites. Plays a role in growth and body fat regulation downstream of the TOR complex 2 pathway. The protein is Histone-lysine N-methyltransferase set-1 (set-1) of Caenorhabditis elegans.